The primary structure comprises 538 residues: Dolichol kinase (538 aa).

The Lumenal segment spans residues 1–13; the sequence is MTRECPSPAPGPG. A helical transmembrane segment spans residues 14 to 34; sequence APLSGSVLAEAAVVFAVVLSI. Over 35–74 the chain is Cytoplasmic; sequence HATVWDRYSWCAVALAVQAFYVQYKWDRLLQQGSAVFQFR. A helical transmembrane segment spans residues 75–95; the sequence is MSANSGLLPASMVMPLLGLVM. Residues 96–111 are Lumenal-facing; sequence KERCQTAGNPFFERFG. A helical membrane pass occupies residues 112–132; it reads IVVAATGMAVALFSSVLALGI. The Cytoplasmic segment spans residues 133–134; it reads TR. A helical membrane pass occupies residues 135-155; that stretch reads PVPTNTCVILGLAGGVIIYIM. Topologically, residues 156-163 are lumenal; the sequence is KHSLSVGE. Residues 164–184 traverse the membrane as a helical segment; it reads VIEVLEVLLIFVYLNMILLYL. The Cytoplasmic portion of the chain corresponds to 185–188; that stretch reads LPRC. Residues 189-209 form a helical membrane-spanning segment; the sequence is FTPGEALLVLGGISFVLNQLI. The Lumenal portion of the chain corresponds to 210–224; that stretch reads KRSLTLVESQGDPVD. A helical transmembrane segment spans residues 225–245; the sequence is FFLLVVVVGMVLMGIFFSTLF. The Cytoplasmic portion of the chain corresponds to 246-254; the sequence is VFMDSGTWA. The helical transmembrane segment at 255-275 threads the bilayer; sequence SSIFFHLMTCVLSLGVVLPWL. The Lumenal segment spans residues 276–297; the sequence is HRLIRRNPLLWLLQFLFQTDTR. The helical transmembrane segment at 298–318 threads the bilayer; sequence IYLLAYWSLLATLACLVVLYQ. The Cytoplasmic segment spans residues 319–337; that stretch reads NAKRSSSESKKHQAPTIAR. Residues 338-354 traverse the membrane as a helical segment; the sequence is KYFHLIVVATYIPGIIF. Residues 355-359 are Lumenal-facing; the sequence is DRPLL. The helical transmembrane segment at 360–380 threads the bilayer; the sequence is YVAATVCLAVFIFLEYVRYFR. Topologically, residues 381–401 are cytoplasmic; it reads IKPLGHTLRSFLSLFLDERDS. The helical transmembrane segment at 402–422 threads the bilayer; the sequence is GPLILTHIYLLLGMSLPIWLI. Over 423-436 the chain is Lumenal; it reads PRPCTQKGSLGGAR. A helical transmembrane segment spans residues 437–457; that stretch reads ALVPYAGVLAVGVGDTVASIF. Residues 458-472 are Cytoplasmic-facing; it reads GSTMGEIRWPGTKKT. A CTP-binding region spans residues 459–474; the sequence is STMGEIRWPGTKKTFE. Residues 473-493 traverse the membrane as a helical segment; sequence FEGTMTSIFAQIISVALILIF. Over 494–495 the chain is Lumenal; the sequence is DS. A helical transmembrane segment spans residues 496-516; sequence GVDLNYSYAWILGSISTVSLL. Topologically, residues 517 to 538 are cytoplasmic; that stretch reads EAYTTQIDNLLLPLYLLILLMA.

This sequence belongs to the polyprenol kinase family. As to expression, ubiquitous.

The protein resides in the endoplasmic reticulum membrane. It catalyses the reaction a di-trans,poly-cis-dolichol + CTP = a di-trans,poly-cis-dolichyl phosphate + CDP + H(+). It functions in the pathway protein modification; protein glycosylation. In terms of biological role, catalyzes CTP-mediated phosphorylation of dolichol, the terminal step in de novo dolichyl monophosphate (Dol-P) biosynthesis. Dol-P is a lipid carrier essential for the synthesis of N-linked and O-linked oligosaccharides and for GPI anchors. This Homo sapiens (Human) protein is Dolichol kinase (DOLK).